Consider the following 343-residue polypeptide: Ribosomal RNA small subunit methyltransferase C (343 aa).

The protein belongs to the methyltransferase superfamily. RsmC family. As to quaternary structure, monomer.

It is found in the cytoplasm. It carries out the reaction guanosine(1207) in 16S rRNA + S-adenosyl-L-methionine = N(2)-methylguanosine(1207) in 16S rRNA + S-adenosyl-L-homocysteine + H(+). Its function is as follows. Specifically methylates the guanine in position 1207 of 16S rRNA in the 30S particle. The polypeptide is Ribosomal RNA small subunit methyltransferase C (Escherichia coli O8 (strain IAI1)).